Consider the following 191-residue polypeptide: Protein GrpE (191 aa).

The protein belongs to the GrpE family. Homodimer.

It is found in the cytoplasm. Functionally, participates actively in the response to hyperosmotic and heat shock by preventing the aggregation of stress-denatured proteins, in association with DnaK and GrpE. It is the nucleotide exchange factor for DnaK and may function as a thermosensor. Unfolded proteins bind initially to DnaJ; upon interaction with the DnaJ-bound protein, DnaK hydrolyzes its bound ATP, resulting in the formation of a stable complex. GrpE releases ADP from DnaK; ATP binding to DnaK triggers the release of the substrate protein, thus completing the reaction cycle. Several rounds of ATP-dependent interactions between DnaJ, DnaK and GrpE are required for fully efficient folding. This chain is Protein GrpE, found in Helicobacter pylori (strain P12).